The following is a 361-amino-acid chain: MQLAQRLCELLMCRRKAAPVADYVLLQPSEDVELRELQAFLDENFKQLEITPADLRTFSRDTDVVNHLLKLLPLYRQCQSKCAFLKGYLSEGCLPHTRPAAEVECKKSQRILEALDILILKLVVGEFAMSEADSLEMLLDKFSTDQASLVEVQRVMGLVDMDCEKSAYMLEAGAAATVAPLTPPAVVQGESGVREDGETVAAVSAFACPSVSDSLIPEETGVTRPMMSLAHINTVSCPTVMRFDQRLLEEGDEEDEVTVMSPSPEPVQQQPPVEPVQQQPQGRGSHRRRYKESAPQETLPTNHEREILDLMRHSPDVPREAVMSPTMVTIPPPQIPFVGSARELRGVKKKKPTAAALLSSA.

Residue C8 is the site of S-palmitoyl cysteine; by host attachment. The disordered stretch occupies residues G251–L299. The segment covering P266–Q281 has biased composition (low complexity).

Belongs to the herpesviridae UL51 family. As to quaternary structure, oligomerizes. Interacts with UL103; this interaction mediates UL103 incorporation to virions. Post-translationally, phosphorylated. Palmitoylation is necessary for Golgi localization.

It is found in the virion tegument. Its subcellular location is the host cytoplasm. The protein localises to the host Golgi apparatus. Plays several roles during the time course of infection, including egress of virus particles from the perinuclear space and secondary envelopment of cytoplasmic capsids that bud into specific trans-Golgi network (TGN)-derived membranes. The polypeptide is Tegument protein UL51 homolog (UL71) (Homo sapiens (Human)).